The following is a 330-amino-acid chain: Short chain dehydrogenase yanD (330 aa).

Positions 57, 86, 113, 204, and 208 each coordinate NADP(+). Tyr-204 acts as the Proton donor in catalysis. Lys-208 acts as the Lowers pKa of active site Tyr in catalysis.

Belongs to the short-chain dehydrogenases/reductases (SDR) family.

Its pathway is secondary metabolite biosynthesis; terpenoid biosynthesis. Its function is as follows. Short chain dehydrogenase; part of the gene cluster that mediates the biosynthesis of yanuthone D, a fungal isoprenoid epoxycyclohexenone that acts as an antibiotic against fungi and bacteria. The first step of the pathway is the synthesis of 6-methylsalicylic acid (6-MSA) by the polyketide synthase yanA. 6-MSA is then converted to m-cresol by the decarboxylase yanB. The cytochrome P450 monooxygenase yanC then catalyzes the oxidation of m-cresol to toluquinol. Epoxidation of toluquinol is then performed by the short chain dehydrogenase yanD, with the help of yanE, and a further prenylation by yanG leads to 7-deacetoxyyanuthone A. The next step is the hydroxylation of C-22 of 7-deacetoxyyanuthone A by the cytochrome P450 monooxygenase yanH to yield 22-deacetylyanuthone A. O-Mevalon transferase yanI then attaches mevalon to the hydroxyl group of 22-deacetylyanuthone A to produce yanuthone E. Finally, the FAD-dependent monooxygenase yanF oxidizes the hydroxyl group at C15 of yanuthone E to form yanuthone D. Furthermore, several branching points in the pathway lead to the production of yanuthones F and G from 7-deacetoxyyanuthone A; yanuthones H and I from 22-deacetylyanuthone A; and yanuthone J from yanuthone E. YanD is also involved in the synthesis of yanuthone X1 which does not have 6-methylsalicylic acid (6-MSA) as precursor. The chain is Short chain dehydrogenase yanD from Aspergillus niger (strain ATCC 1015 / CBS 113.46 / FGSC A1144 / LSHB Ac4 / NCTC 3858a / NRRL 328 / USDA 3528.7).